Reading from the N-terminus, the 317-residue chain is Mitochondrial thiamine pyrophosphate carrier 1 (317 aa).

Transmembrane regions (helical) follow at residues 21–41, 86–106, 122–142, 176–196, 207–227, and 281–300; these read AVSGLHAVVAGSVSGLVARSV, VPASAMYVLYGSLQFGTYAWL, LAVGALAGLVSSLLTYPLDLL, GGAWAIAATTLTTGLIFGIYE, LPWLAAAASPTAGLVSKAAVF, and GLTMALCKSTPTTVITLWVY. Solcar repeat units follow at residues 22-109, 116-201, and 206-306; these read VSGL…LNTA, PPQA…CTIA, and GLPW…CLRL.

Belongs to the mitochondrial carrier (TC 2.A.29) family.

It localises to the mitochondrion inner membrane. Functionally, mitochondrial transporter that mediates uptake of thiamine pyrophosphate (ThPP) into mitochondria. In Eremothecium gossypii (strain ATCC 10895 / CBS 109.51 / FGSC 9923 / NRRL Y-1056) (Yeast), this protein is Mitochondrial thiamine pyrophosphate carrier 1 (TPC1).